We begin with the raw amino-acid sequence, 638 residues long: DNA mismatch repair protein MutL (638 aa).

The interval 398-435 (GREGTSFGTQTNAFGSMATPRDNSRGSYSAGESRQRTE) is disordered.

It belongs to the DNA mismatch repair MutL/HexB family.

Its function is as follows. This protein is involved in the repair of mismatches in DNA. It is required for dam-dependent methyl-directed DNA mismatch repair. May act as a 'molecular matchmaker', a protein that promotes the formation of a stable complex between two or more DNA-binding proteins in an ATP-dependent manner without itself being part of a final effector complex. The polypeptide is DNA mismatch repair protein MutL (Shewanella baltica (strain OS155 / ATCC BAA-1091)).